We begin with the raw amino-acid sequence, 335 residues long: Cytoskeleton protein RodZ (335 aa).

The Cytoplasmic segment spans residues 1–111; sequence MNTEATHDQN…LGKRRKKRDG (111 aa). One can recognise an HTH cro/C1-type domain in the interval 19-71; the sequence is LRNAREQLGLSQQAVAERLCLKVSTVRDIEEDKAPADLASTFLRGYIRSYARL. The H-T-H motif DNA-binding region spans 30–49; it reads QQAVAERLCLKVSTVRDIEE. A helical; Signal-anchor for type II membrane protein membrane pass occupies residues 112-132; that stretch reads WLMTFTWLVLFVVIGLSGAWW. At 133 to 335 the chain is on the periplasmic side; it reads WQDHKAQQEE…TLNAEQSPAQ (203 aa). Polar residues predominate over residues 148–164; the sequence is DQSSAELNNNQSQSVPL. The tract at residues 148 to 244 is disordered; that stretch reads DQSSAELNNN…PLPTDQAGVT (97 aa). Composition is skewed to low complexity over residues 165–205 and 217–239; these read DTST…DPQQ and DTAATPAPAATTTPDGAAPLPTD.

It belongs to the RodZ family.

Its subcellular location is the cell inner membrane. Functionally, cytoskeletal protein that is involved in cell-shape control through regulation of the length of the long axis. This chain is Cytoskeleton protein RodZ, found in Escherichia coli O127:H6 (strain E2348/69 / EPEC).